Reading from the N-terminus, the 614-residue chain is Deoxynucleoside triphosphate triphosphohydrolase SAMHD1 (614 aa).

A compositionally biased stretch (low complexity) spans 1–13; it reads MGSPAAGWGAAPA. The tract at residues 1–33 is disordered; sequence MGSPAAGWGAAPAKRARREGSAESSCGSPADRD. Positions 37 to 102 constitute an SAM domain; sequence WDTERLCQHL…LACLNQLRQT (66 aa). Residues lysine 107 and valine 108 each coordinate GTP. Residue asparagine 110 participates in dGTP binding. Positions 128, 133, and 136 each coordinate GTP. DGTP-binding residues include glutamine 140, leucine 141, valine 147, and arginine 155. Glutamine 140 lines the dATP pocket. DCTP is bound at residue glutamine 140. Glutamine 140 serves as a coordination point for dTTP. Arginine 155 is a dATP binding site. DCTP is bound at residue arginine 155. DTTP is bound at residue arginine 155. Residues 155 to 307 enclose the HD domain; sequence RFEHSLGVGY…GIDVDKWDYF (153 aa). Mn(2+) is bound by residues histidine 158, histidine 197, and aspartate 198. DATP is bound by residues histidine 201 and histidine 206. Residues histidine 201 and histidine 206 each contribute to the dCTP site. The dTTP site is built by histidine 201 and histidine 206. Histidine 224 is an active-site residue. Aspartate 302 contacts Mn(2+). DGTP is bound by residues lysine 303, tyrosine 306, aspartate 310, arginine 324, arginine 343, lysine 345, asparagine 349, arginine 357, tyrosine 365, glutamine 366, histidine 367, and lysine 368. Residues lysine 303, tyrosine 306, and aspartate 310 each contribute to the dATP site. DCTP contacts are provided by lysine 303, tyrosine 306, and aspartate 310. Lysine 303, tyrosine 306, and aspartate 310 together coordinate dTTP. Arginine 357 lines the dATP pocket. Residue arginine 357 participates in dCTP binding. Glutamine 366 lines the dATP pocket. Glutamine 366 serves as a coordination point for dCTP. Glutamine 366 is a dTTP binding site. GTP-binding residues include arginine 442, lysine 446, and lysine 515. Lysine 515 contacts dGTP.

The protein belongs to the SAMHD1 family. In terms of assembly, homodimer; in absence of GTP and dNTP. Homotetramer; in GTP- and dNTP-bound form. Interacts with rbbp8/CtIP. Requires Zn(2+) as cofactor.

The protein resides in the nucleus. It localises to the chromosome. It carries out the reaction a 2'-deoxyribonucleoside 5'-triphosphate + H2O = a 2'-deoxyribonucleoside + triphosphate + H(+). It catalyses the reaction dATP + H2O = 2'-deoxyadenosine + triphosphate + H(+). The enzyme catalyses dCTP + H2O = 2'-deoxycytidine + triphosphate + H(+). The catalysed reaction is dGTP + H2O = 2'-deoxyguanosine + triphosphate + H(+). It carries out the reaction dTTP + H2O = thymidine + triphosphate + H(+). With respect to regulation, allosterically activated and regulated via the combined actions of GTP and dNTPs (dATP, dGTP, dTTP and dCTP): Allosteric site 1 binds GTP, while allosteric site 2 binds dNTP. Allosteric activation promotes the formation of highly active homotetramers. Functionally, protein that acts both as a host restriction factor involved in defense response to virus and as a regulator of DNA end resection at stalled replication forks. Has deoxynucleoside triphosphate (dNTPase) activity, which is required to restrict infection by viruses: dNTPase activity reduces cellular dNTP levels to levels too low for retroviral reverse transcription to occur, blocking early-stage virus replication in dendritic and other myeloid cells. Functions during S phase at stalled DNA replication forks to promote the resection of gapped or reversed forks: acts by stimulating the exonuclease activity of MRE11, activating the ATR-CHK1 pathway and allowing the forks to restart replication. Its ability to promote degradation of nascent DNA at stalled replication forks is required to prevent induction of type I interferons, thereby preventing chronic inflammation. Ability to promote DNA end resection at stalled replication forks is independent of dNTPase activity. This chain is Deoxynucleoside triphosphate triphosphohydrolase SAMHD1, found in Gallus gallus (Chicken).